The primary structure comprises 199 residues: dCTP deaminase (199 aa).

DCTP is bound by residues 110–115, aspartate 128, 136–138, tyrosine 171, and glutamine 182; these read RSSLAR and VLE. Glutamate 138 functions as the Proton donor/acceptor in the catalytic mechanism.

This sequence belongs to the dCTP deaminase family. Homotrimer.

The catalysed reaction is dCTP + H2O + H(+) = dUTP + NH4(+). It functions in the pathway pyrimidine metabolism; dUMP biosynthesis; dUMP from dCTP (dUTP route): step 1/2. Functionally, catalyzes the deamination of dCTP to dUTP. The protein is dCTP deaminase of Pseudoalteromonas atlantica (strain T6c / ATCC BAA-1087).